A 547-amino-acid polypeptide reads, in one-letter code: Dihydrolipoyllysine-residue acetyltransferase component of pyruvate dehydrogenase complex (547 aa).

The 74-residue stretch at 2–75 (SELIRVPDIG…KEGDEILELE (74 aa)) folds into the Lipoyl-binding 1 domain. Lysine 41 is subject to N6-lipoyllysine. The segment at 75–117 (EVEGGEQPAEAKAEAAPAQPEAPKAEAPAPAPSESKPAAPAAA) is disordered. The span at 80 to 117 (EQPAEAKAEAAPAQPEAPKAEAPAPAPSESKPAAPAAA) shows a compositional bias: low complexity. Residues 119–193 (VQDIKVPDIG…GTGDLILKLK (75 aa)) form the Lipoyl-binding 2 domain. Lysine 159 carries the N6-lipoyllysine modification. A compositionally biased stretch (low complexity) spans 202 to 231 (EEQPAAAPAQAAAPAAEQKPAAAAPAPAKA). A disordered region spans residues 202–248 (EEQPAAAPAQAAAPAAEQKPAAAAPAPAKADTPAPVGAPSRDGAKVH). A Peripheral subunit-binding (PSBD) domain is found at 248-285 (HAGPAVRMLAREFGVELSEVKASGPKGRILKEDVQVFV). The active site involves histidine 520.

It belongs to the 2-oxoacid dehydrogenase family. Forms a 24-polypeptide structural core with octahedral symmetry. Requires (R)-lipoate as cofactor.

The enzyme catalyses N(6)-[(R)-dihydrolipoyl]-L-lysyl-[protein] + acetyl-CoA = N(6)-[(R)-S(8)-acetyldihydrolipoyl]-L-lysyl-[protein] + CoA. The pyruvate dehydrogenase complex catalyzes the overall conversion of pyruvate to acetyl-CoA and CO(2). It contains multiple copies of three enzymatic components: pyruvate dehydrogenase (E1), dihydrolipoamide acetyltransferase (E2) and lipoamide dehydrogenase (E3). This chain is Dihydrolipoyllysine-residue acetyltransferase component of pyruvate dehydrogenase complex (aceF), found in Pseudomonas aeruginosa (strain ATCC 15692 / DSM 22644 / CIP 104116 / JCM 14847 / LMG 12228 / 1C / PRS 101 / PAO1).